We begin with the raw amino-acid sequence, 277 residues long: Ribonuclease HII (277 aa).

Positions 20–250 (KLIIGLDEAG…SKKLLKKIED (231 aa)) constitute an RNase H type-2 domain. A divalent metal cation is bound by residues D26, E27, and D141.

This sequence belongs to the RNase HII family. Requires Mn(2+) as cofactor. The cofactor is Mg(2+).

The protein localises to the cytoplasm. It catalyses the reaction Endonucleolytic cleavage to 5'-phosphomonoester.. Functionally, endonuclease that specifically degrades the RNA of RNA-DNA hybrids. The polypeptide is Ribonuclease HII (Methanococcus aeolicus (strain ATCC BAA-1280 / DSM 17508 / OCM 812 / Nankai-3)).